We begin with the raw amino-acid sequence, 557 residues long: Aerobic glycerol-3-phosphate dehydrogenase (557 aa).

Aspartate 21–glutamate 49 contributes to the FAD binding site.

It belongs to the FAD-dependent glycerol-3-phosphate dehydrogenase family. It depends on FAD as a cofactor.

The protein resides in the cytoplasm. It carries out the reaction a quinone + sn-glycerol 3-phosphate = dihydroxyacetone phosphate + a quinol. It functions in the pathway polyol metabolism; glycerol degradation via glycerol kinase pathway; glycerone phosphate from sn-glycerol 3-phosphate (aerobic route): step 1/1. This chain is Aerobic glycerol-3-phosphate dehydrogenase (glpD), found in Staphylococcus aureus (strain MRSA252).